A 577-amino-acid polypeptide reads, in one-letter code: 2-succinyl-5-enolpyruvyl-6-hydroxy-3-cyclohexene-1-carboxylate synthase (577 aa).

Belongs to the TPP enzyme family. MenD subfamily. As to quaternary structure, homodimer. It depends on Mg(2+) as a cofactor. The cofactor is Mn(2+). Requires thiamine diphosphate as cofactor.

It catalyses the reaction isochorismate + 2-oxoglutarate + H(+) = 5-enolpyruvoyl-6-hydroxy-2-succinyl-cyclohex-3-ene-1-carboxylate + CO2. The protein operates within quinol/quinone metabolism; 1,4-dihydroxy-2-naphthoate biosynthesis; 1,4-dihydroxy-2-naphthoate from chorismate: step 2/7. It participates in quinol/quinone metabolism; menaquinone biosynthesis. Functionally, catalyzes the thiamine diphosphate-dependent decarboxylation of 2-oxoglutarate and the subsequent addition of the resulting succinic semialdehyde-thiamine pyrophosphate anion to isochorismate to yield 2-succinyl-5-enolpyruvyl-6-hydroxy-3-cyclohexene-1-carboxylate (SEPHCHC). The polypeptide is 2-succinyl-5-enolpyruvyl-6-hydroxy-3-cyclohexene-1-carboxylate synthase (Porphyromonas gingivalis (strain ATCC BAA-308 / W83)).